The following is a 473-amino-acid chain: N-lysine methyltransferase SETD6 (473 aa).

Lys-39 bears the N6-methylated lysine; by autocatalysis mark. The 227-residue stretch at 60–286 folds into the SET domain; the sequence is PPAQVAVSRQ…KGHEIFNTYG (227 aa). Residue 73-75 participates in S-adenosyl-L-methionine binding; the sequence is AGY. Trp-122 serves as a coordination point for substrate. The residue at position 179 (Lys-179) is an N6-methylated lysine; by autocatalysis. Residue Tyr-223 participates in S-adenosyl-L-methionine binding. Positions 224 and 226 each coordinate substrate. 251-252 contacts S-adenosyl-L-methionine; it reads NH. Residues Tyr-262 and Tyr-297 each contribute to the substrate site. Tyr-297 is an S-adenosyl-L-methionine binding site. At Lys-372 the chain carries N6-methylated lysine; by autocatalysis.

Belongs to the class V-like SAM-binding methyltransferase superfamily. Histone-lysine methyltransferase family. SETD6 subfamily. Monomer, homodimer and homotrimer; these structures are stabilized in the presence of S-adenosyl-L-methionine (SAM). In terms of processing, automethylated; Lys-39 and Lys-179 serve as the major automethylation sites.

The protein localises to the nucleus. The enzyme catalyses L-lysyl-[protein] + S-adenosyl-L-methionine = N(6)-methyl-L-lysyl-[protein] + S-adenosyl-L-homocysteine + H(+). It catalyses the reaction L-lysyl(8)-[histone H2AZ] + S-adenosyl-L-methionine = N(6)-methyl-L-lysyl(8)-[histone H2AZ] + S-adenosyl-L-homocysteine + H(+). Its activity is regulated as follows. Activated by automethylation. Protein-lysine N-methyltransferase. Monomethylates 'Lys-310' of the RELA subunit of NF-kappa-B complex, leading to down-regulation of NF-kappa-B transcription factor activity. Monomethylates 'Lys-8' of H2AZ (H2AZK8me1). Required for the maintenance of embryonic stem cell self-renewal. Methylates PAK4. This Homo sapiens (Human) protein is N-lysine methyltransferase SETD6.